The chain runs to 1896 residues: von Willebrand factor A domain-containing protein 8 (1896 aa).

A mitochondrion-targeting transit peptide spans 1-18; it reads MHSRILFKGTAAAVAARR. 439 to 446 is an ATP binding site; the sequence is GAKGCGKS. The interval 1536-1564 is disordered; that stretch reads GLDVSSPKHGKIDAKNAPHVGGNQWAGGT. Residues 1705-1887 form the VWFA domain; it reads RLRVLADVSG…KEIPQILQQI (183 aa).

In terms of assembly, monomer.

The protein localises to the mitochondrion. In terms of biological role, exhibits ATPase activity in vitro. This is von Willebrand factor A domain-containing protein 8 (vwa8) from Danio rerio (Zebrafish).